A 263-amino-acid chain; its full sequence is Ubiquitin domain-containing protein 7SL RNA2 (263 aa).

One can recognise a Ubiquitin-like 1 domain in the interval 1–53 (MNVDIDTETGSSFSITIDFGETVLQIKEKIEKSQGIPVSKQILYLDGKALEDD). The tract at residues 74–93 (ADPNQSNEQTEQSKQIDDKK) is disordered. Polar residues predominate over residues 76 to 86 (PNQSNEQTEQS). In terms of domain architecture, Ubiquitin-like 2 spans 184–263 (FTVHVKPYQE…GDTIELIREK (80 aa)).

This sequence belongs to the ubiquitin family. As to expression, expressed in seedlings, roots, stems, rosettes and flowers (at protein level).

Its subcellular location is the nucleus. In terms of biological role, controls phase transition from the vegetative to the reproductive state. Involved in the maintenance of the shoot apical meristem (SAM) thus preventing inflorescence meristem (IM) formation and subsequent inflorescence stem development during flowering. Regulates leaf and organ morphology. The chain is Ubiquitin domain-containing protein 7SL RNA2 from Arabidopsis thaliana (Mouse-ear cress).